The following is a 344-amino-acid chain: uncharacterized protein (344 aa).

Residues 1–27 (MKKWLIIAVSLAIAIVLFMYTKGEAKA) form the signal peptide. The 316-residue stretch at 29 to 344 (GMTVGYTTGD…FWKAIRKGTK (316 aa)) folds into the GH18 domain. The active-site Proton donor is the glutamate 140.

Belongs to the glycosyl hydrolase 18 family.

This is an uncharacterized protein from Bacillus subtilis (strain 168).